The chain runs to 320 residues: uncharacterized protein (320 aa).

It belongs to the anthranilate phosphoribosyltransferase family.

This is an uncharacterized protein from Escherichia coli (strain K12).